Consider the following 534-residue polypeptide: Hypothemycin biosynthesis cluster protein hpm4 (534 aa).

3 disordered regions span residues 34–61 (IEPA…SDGP), 110–130 (LQSP…PLRL), and 236–287 (DGTG…KKCI). Composition is skewed to low complexity over residues 112–127 (SPTT…SCAP) and 258–275 (TVSS…ACQT).

It functions in the pathway secondary metabolite biosynthesis. Functionally, part of the gene cluster that mediates the biosynthesis of hypothemycin, a resorcylic acid lactone (RAL) that irreversibly inhibits a subset of protein kinases with a conserved cysteine in the ATP binding site such as human ERK2. The first step is performed by both PKSs hmp3 and hmp8 and leads to the production of 7',8'-dehydrozearalenol (DHZ). The highly reducing PKS hpm8 synthesizes the reduced hexaketide (7S,11S,2E,8E)-7,11-dihydroxy-dodeca-2,8-dienoate, which is transferred downstream to the non-reducing PKS hpm3. Hpm3 then extends the reduced hexaketide to a nonaketide, after which regioselective cyclization and macrolactonization affords DHZ. The next step is the conversion of DHZ into aigialomycin C and is performed by the O-methyltransferase hmp5, the FAD-binding monooxygenase hmp7, and the cytochrome P450 monooxygenase hmp1. The wide substrate tolerance of the hmp5 and hmp7 implies that the reactions from DHZ to aigialomycin C can occur in any order. The steps from aigialomycin C to hypothemycin are less well established. The FAD-linked oxidoreductase hmp9 presumably catalyzes oxidation of the C-6' hydroxyl to a ketone. The timing of this oxidation is important, since the resulting enone functional group is a Michael acceptor that can react spontaneously with glutathione, an abundant metabolite in fungal cells. The glutathione S-transferase hmp2 catalyzes cis-trans isomerization of the 7',8' double bond with equilibrium favoring the trans isomer. The hpm6-encoded transporter might preferentially pump hypothemycin out of the cell relative to the trans isomer aigialomycin A. The cis-to-trans isomerization may be coupled with C-4' hydroxylation, since all known hypothemycin analogs containing the enone functional group also have hydroxyl groups at both C-4' and C-5'. This chain is Hypothemycin biosynthesis cluster protein hpm4, found in Hypomyces subiculosus (Nectria subiculosa).